A 60-amino-acid chain; its full sequence is Potassium channel toxin alpha-KTx 29.3 (60 aa).

The first 28 residues, 1–28 (MKSVCGVLIILVVLTTMLSISTFSTVGA), serve as a signal peptide directing secretion. Intrachain disulfides connect cysteine 32–cysteine 51, cysteine 40–cysteine 56, and cysteine 44–cysteine 58.

It belongs to the short scorpion toxin superfamily. Potassium channel inhibitor family. Alpha-KTx 29 subfamily. Expressed by the venom gland.

It is found in the secreted. Weakly inhibits the Kv1.3/KCNA3 channel (1 uM of thetoxin inhibits currents by 13.2%) and Kv7.1/KCNQ1 channel (10 uM of the toxin inhibits currents by 27.7%). The protein is Potassium channel toxin alpha-KTx 29.3 of Lychas mucronatus (Chinese swimming scorpion).